The chain runs to 86 residues: Small ribosomal subunit protein uS17 (86 aa).

This sequence belongs to the universal ribosomal protein uS17 family. Part of the 30S ribosomal subunit.

Functionally, one of the primary rRNA binding proteins, it binds specifically to the 5'-end of 16S ribosomal RNA. This chain is Small ribosomal subunit protein uS17, found in Nitrosococcus oceani (strain ATCC 19707 / BCRC 17464 / JCM 30415 / NCIMB 11848 / C-107).